The sequence spans 825 residues: Hypoxia-inducible factor 1-alpha (825 aa).

Positions 1–30 (MEGAGGENEKKKMSSERRKEKSRDAARSRR) are disordered. Positions 1–401 (MEGAGGENEK…KEPDALTLLA (401 aa)) are interaction with TSGA10. Basic and acidic residues predominate over residues 7–30 (ENEKKKMSSERRKEKSRDAARSRR). Residues 17–70 (RRKEKSRDAARSRRSKESEVFYELAHQLPLPHNVSSHLDKASVMRLTISYLRVR) form the bHLH domain. Positions 21-30 (KSRDAARSRR) are DNA-binding. The region spanning 85–158 (KAQMNCFYLK…THRNGPVRKG (74 aa)) is the PAS 1 domain. A required for heterodimer formation with ARNT region spans residues 170–191 (RMKCTLTSRGRTMNIKSATWKV). The region spanning 228–298 (PHPSNIEIPL…KTHHDMFTKG (71 aa)) is the PAS 2 domain. Position 247 is a phosphoserine; by CK1 (serine 247). One can recognise a PAC domain in the interval 302–345 (TGQYRMLAKRGGYVWVETQATVIYNTKDSQPQCIVCVNYVVSGI). The ODD stretch occupies residues 401 to 602 (APAAGDTIIS…STVTGFQQTQ (202 aa)). Proline 402 carries the 4-hydroxyproline modification. Residues 492–516 (QIQDQPASPSDGSTRQSSPEPNSPS) are compositionally biased toward polar residues. Positions 492-520 (QIQDQPASPSDGSTRQSSPEPNSPSEYCF) are disordered. The tract at residues 530–574 (FKLELVEKLFAEDTEAKNPFSAQDTDLDLEMLAPYIPMDDDFQLR) is NTAD. N6-acetyllysine; alternate is present on lysine 531. Residue lysine 531 forms a Glycyl lysine isopeptide (Lys-Gly) (interchain with G-Cter in ubiquitin); alternate linkage. Residues lysine 537 and lysine 546 each participate in a glycyl lysine isopeptide (Lys-Gly) (interchain with G-Cter in ubiquitin) cross-link. Residue serine 550 is modified to Phosphoserine; by GSK3-beta. Phosphothreonine; by GSK3-beta is present on threonine 554. Proline 563 carries the post-translational modification 4-hydroxyproline. Serine 575 is modified (phosphoserine; by PLK3). Positions 575-784 (SFDQLSPLES…SDLACRLLGQ (210 aa)) are ID. Disordered regions lie at residues 579 to 602 (LSPL…QQTQ) and 654 to 674 (AKAS…RAGK). Serine 588 carries the post-translational modification Phosphoserine; by GSK3-beta. A compositionally biased stretch (polar residues) spans 654–667 (AKASAYSGTHSRTA). Residue serine 657 is modified to Phosphoserine; by PLK3. The Nuclear localization signal signature appears at 717–721 (RKRKM). Positions 785–825 (SMDESGLPQLTSYDCEVNAPIQGSRNLLQGEELLRALDQVN) are CTAD. Cysteine 799 is subject to S-nitrosocysteine. Asparagine 802 is modified ((3S)-3-hydroxyasparagine).

In terms of assembly, interacts with the ARNT; forms a heterodimer that binds core DNA sequence 5'-TACGTG-3' within the hypoxia response element (HRE) of target gene promoters. Interacts with COPS5; the interaction increases the transcriptional activity of HIF1A through increased stability. Interacts with EP300 (via TAZ-type 1 domains); the interaction is stimulated in response to hypoxia and inhibited by CITED2. Interacts with CREBBP (via TAZ-type 1 domains). Interacts with NCOA1, NCOA2, APEX1 and HSP90. Interacts (hydroxylated within the ODD domain) with VHLL (via beta domain); the interaction, leads to polyubiquitination and subsequent HIF1A proteasomal degradation. During hypoxia, sumoylated HIF1A also binds VHL; the interaction promotes the ubiquitination of HIF1A. Interacts with SENP1; the interaction desumoylates HIF1A resulting in stabilization and activation of transcription. Interacts (via the ODD domain) with NAA10; the interaction appears not to acetylate HIF1A nor have any affect on protein stability, during hypoxia. Interacts with RWDD3; the interaction enhances HIF1A sumoylation. Interacts with TSGA10. Interacts with HIF3A. Interacts with RORA (via the DNA binding domain); the interaction enhances HIF1A transcription under hypoxia through increasing protein stability. Interaction with PSMA7 inhibits the transactivation activity of HIF1A under both normoxic and hypoxia-mimicking conditions. Interacts with USP20. Interacts with RACK1; promotes HIF1A ubiquitination and proteasome-mediated degradation. Interacts (via N-terminus) with USP19. Interacts with SIRT2. Interacts (deacetylated form) with EGLN1. Interacts with CBFA2T3. Interacts with HSP90AA1 and HSP90AB1. Interacts with DCUN1D1; this interaction increases the interaction between VHL and DCUN1D1. Interacts with HIF1AN. Post-translationally, S-nitrosylation of Cys-799 may be responsible for increased recruitment of p300 coactivator necessary for transcriptional activity of HIF-1 complex. In terms of processing, acetylation of Lys-531 by ARD1 increases interaction with VHL and stimulates subsequent proteasomal degradation. Deacetylated by SIRT2 increases its interaction with and hydroxylation by EGLN1 thereby inactivating HIF1A activity by inducing its proteasomal degradation. Ubiquitinated; in normoxia, following hydroxylation and interaction with VHL. Lys-531 appears to be the principal site of ubiquitination. Clioquinol, the Cu/Zn-chelator, inhibits ubiquitination through preventing hydroxylation at Asn-802. Ubiquitinated by E3 ligase VHL. Deubiquitinated by UCHL1. Post-translationally, requires phosphorylation for DNA-binding. Phosphorylation at Ser-247 by CSNK1D/CK1 represses kinase activity and impairs ARNT binding. Phosphorylation by GSK3-beta and PLK3 promote degradation by the proteasome. In terms of processing, the iron and 2-oxoglutarate dependent 3-hydroxylation of asparagine is (S) stereospecific within HIF CTAD domains. Sumoylated; with SUMO1 under hypoxia. Sumoylation is enhanced through interaction with RWDD3. Both sumoylation and desumoylation seem to be involved in the regulation of its stability during hypoxia. Sumoylation can promote either its stabilization or its VHL-dependent degradation by promoting hydroxyproline-independent HIF1A-VHL complex binding, thus leading to HIF1A ubiquitination and proteasomal degradation. Desumoylation by SENP1 increases its stability amd transcriptional activity. There is a disaccord between various publications on the effect of sumoylation and desumoylation on its stability and transcriptional activity. Post-translationally, in normoxia, is hydroxylated on Pro-402 and Pro-563 in the oxygen-dependent degradation domain (ODD) by EGLN1/PHD2 and EGLN2/PHD1. EGLN3/PHD3 has also been shown to hydroxylate Pro-563. The hydroxylated prolines promote interaction with VHL, initiating rapid ubiquitination and subsequent proteasomal degradation. Deubiquitinated by USP20. Under hypoxia, proline hydroxylation is impaired and ubiquitination is attenuated, resulting in stabilization. In normoxia, is hydroxylated on Asn-802 by HIF1AN, thus abrogating interaction with CREBBP and EP300 and preventing transcriptional activation. Repressed by iron ion, via Fe(2+) prolyl hydroxylase (PHD) enzymes-mediated hydroxylation and subsequent proteasomal degradation. Expressed in the kidney, higher expression is seen in the renal medulla than in the cortex. Expressed also in the perivenous zone of the liver.

The protein localises to the cytoplasm. The protein resides in the nucleus. It localises to the nucleus speckle. Induced by reactive oxygen species (ROS). In terms of biological role, functions as a master transcriptional regulator of the adaptive response to hypoxia. Under hypoxic conditions, activates the transcription of over 40 genes, including erythropoietin, glucose transporters, glycolytic enzymes, vascular endothelial growth factor, HILPDA, and other genes whose protein products increase oxygen delivery or facilitate metabolic adaptation to hypoxia. Plays an essential role in embryonic vascularization, tumor angiogenesis and pathophysiology of ischemic disease. Heterodimerizes with ARNT; heterodimer binds to core DNA sequence 5'-TACGTG-3' within the hypoxia response element (HRE) of target gene promoters. Activation requires recruitment of transcriptional coactivators such as CREBBP and EP300. Activity is enhanced by interaction with NCOA1 and/or NCOA2. Interaction with redox regulatory protein APEX1 seems to activate CTAD and potentiates activation by NCOA1 and CREBBP. Involved in the axonal distribution and transport of mitochondria in neurons during hypoxia. This chain is Hypoxia-inducible factor 1-alpha (Hif1a), found in Rattus norvegicus (Rat).